The sequence spans 87 residues: MSERNDRKVYVGKVVSDKMDKTITVLVETYKTHKLYGKRVKYSKKYKTHDENNSAKLGDIVKIQETRPLSATKRFRLVEIVEESVII.

This sequence belongs to the universal ribosomal protein uS17 family. As to quaternary structure, part of the 30S ribosomal subunit.

One of the primary rRNA binding proteins, it binds specifically to the 5'-end of 16S ribosomal RNA. The sequence is that of Small ribosomal subunit protein uS17 from Staphylococcus aureus (strain JH1).